The following is a 393-amino-acid chain: MDTFLNTSESVNEGHPDKLCDQISDAVLDACLEQDPDSKVACETCSKTNMVMVFGEITTKANVDYEKIVRKTCRDIGFVSDDVGLDADNCKVLVQIEQQSPDIAQGVHGHLTKRPEDIGAGDQGHMFGYATDETPELMPLSHVLATKLGAKLTEVRKNGTCPWLRPDGKTQVTVEYYNDKGAMVPIRVHTVLISTQHDETVTNDEIAADLKEHVIKPIIPAKYLDEKTIFHLNPSGRFVIGGPHGDAGLTGRMIIIDTYGGWGAHGGGAFSGKDPTKVDRSGAYIVRQAAKSIVANGLARRCIVQVSYAIGVPDPLSVFVDSYGTGNIPDKEILKIVKETFDFRPGMIAINLDLKRGGNNRFLKTAAYGHFGRDDADFTWEVVKPLKWEKPQA.

Glutamate 9 provides a ligand contact to Mg(2+). Histidine 15 contributes to the ATP binding site. Glutamate 43 contributes to the K(+) binding site. The L-methionine site is built by glutamate 56 and glutamine 99. ATP is bound by residues 167-169 (DGK), 235-238 (SGRF), aspartate 246, 252-253 (RM), alanine 269, lysine 273, and lysine 277. Residue aspartate 246 coordinates L-methionine. Lysine 277 is a binding site for L-methionine.

Belongs to the AdoMet synthase family. In terms of assembly, homotetramer. Mn(2+) is required as a cofactor. Requires Mg(2+) as cofactor. It depends on Co(2+) as a cofactor. K(+) serves as cofactor.

It is found in the cytoplasm. It carries out the reaction L-methionine + ATP + H2O = S-adenosyl-L-methionine + phosphate + diphosphate. It functions in the pathway amino-acid biosynthesis; S-adenosyl-L-methionine biosynthesis; S-adenosyl-L-methionine from L-methionine: step 1/1. Its function is as follows. Catalyzes the formation of S-adenosylmethionine from methionine and ATP. The reaction comprises two steps that are both catalyzed by the same enzyme: formation of S-adenosylmethionine (AdoMet) and triphosphate, and subsequent hydrolysis of the triphosphate. The protein is S-adenosylmethionine synthase 2 (SAMS2) of Daucus carota (Wild carrot).